The sequence spans 481 residues: Argininosuccinate lyase (481 aa).

Residues 1 to 17 are compositionally biased toward polar residues; sequence MKNAPVDTQSDAATSFE. Positions 1–25 are disordered; it reads MKNAPVDTQSDAATSFEGTAANPQW.

It belongs to the lyase 1 family. Argininosuccinate lyase subfamily.

It localises to the cytoplasm. It carries out the reaction 2-(N(omega)-L-arginino)succinate = fumarate + L-arginine. The protein operates within amino-acid biosynthesis; L-arginine biosynthesis; L-arginine from L-ornithine and carbamoyl phosphate: step 3/3. This chain is Argininosuccinate lyase, found in Gluconobacter oxydans (strain 621H) (Gluconobacter suboxydans).